Here is a 212-residue protein sequence, read N- to C-terminus: Imidazole glycerol phosphate synthase subunit HisH (212 aa).

Positions 3–212 (TVAVIDYGMG…QNFAAWDGRW (210 aa)) constitute a Glutamine amidotransferase type-1 domain. Cys-81 serves as the catalytic Nucleophile. Residues His-190 and Glu-192 contribute to the active site.

As to quaternary structure, heterodimer of HisH and HisF.

Its subcellular location is the cytoplasm. The enzyme catalyses 5-[(5-phospho-1-deoxy-D-ribulos-1-ylimino)methylamino]-1-(5-phospho-beta-D-ribosyl)imidazole-4-carboxamide + L-glutamine = D-erythro-1-(imidazol-4-yl)glycerol 3-phosphate + 5-amino-1-(5-phospho-beta-D-ribosyl)imidazole-4-carboxamide + L-glutamate + H(+). It carries out the reaction L-glutamine + H2O = L-glutamate + NH4(+). The protein operates within amino-acid biosynthesis; L-histidine biosynthesis; L-histidine from 5-phospho-alpha-D-ribose 1-diphosphate: step 5/9. In terms of biological role, IGPS catalyzes the conversion of PRFAR and glutamine to IGP, AICAR and glutamate. The HisH subunit catalyzes the hydrolysis of glutamine to glutamate and ammonia as part of the synthesis of IGP and AICAR. The resulting ammonia molecule is channeled to the active site of HisF. The sequence is that of Imidazole glycerol phosphate synthase subunit HisH from Pseudomonas syringae pv. syringae (strain B728a).